The following is a 388-amino-acid chain: LL-diaminopimelate aminotransferase (388 aa).

Substrate is bound by residues tyrosine 13, glycine 38, lysine 102, tyrosine 126, and asparagine 176. Residues 101 to 102, tyrosine 126, asparagine 176, tyrosine 207, and 235 to 237 contribute to the pyridoxal 5'-phosphate site; these read SK and SLS. At lysine 238 the chain carries N6-(pyridoxal phosphate)lysine. Residue arginine 246 coordinates pyridoxal 5'-phosphate. Position 364 (arginine 364) interacts with substrate.

Belongs to the class-I pyridoxal-phosphate-dependent aminotransferase family. LL-diaminopimelate aminotransferase subfamily. Homodimer. Pyridoxal 5'-phosphate serves as cofactor.

It catalyses the reaction (2S,6S)-2,6-diaminopimelate + 2-oxoglutarate = (S)-2,3,4,5-tetrahydrodipicolinate + L-glutamate + H2O + H(+). It participates in amino-acid biosynthesis; L-lysine biosynthesis via DAP pathway; LL-2,6-diaminopimelate from (S)-tetrahydrodipicolinate (aminotransferase route): step 1/1. Functionally, involved in the synthesis of meso-diaminopimelate (m-DAP or DL-DAP), required for both lysine and peptidoglycan biosynthesis. Catalyzes the direct conversion of tetrahydrodipicolinate to LL-diaminopimelate. The protein is LL-diaminopimelate aminotransferase of Dehalococcoides mccartyi (strain ATCC BAA-2266 / KCTC 15142 / 195) (Dehalococcoides ethenogenes (strain 195)).